Reading from the N-terminus, the 491-residue chain is Cytochrome P450 2B2 (491 aa).

Ser128 carries the post-translational modification Phosphoserine; by PKA. Cys436 lines the heme pocket.

It belongs to the cytochrome P450 family. Heme is required as a cofactor. Phosphorylation is accompanied by a decrease in enzyme activity.

It localises to the endoplasmic reticulum membrane. The protein localises to the microsome membrane. It carries out the reaction an organic molecule + reduced [NADPH--hemoprotein reductase] + O2 = an alcohol + oxidized [NADPH--hemoprotein reductase] + H2O + H(+). Its function is as follows. Cytochromes P450 are a group of heme-thiolate monooxygenases. In liver microsomes, this enzyme is involved in an NADPH-dependent electron transport pathway. It oxidizes a variety of structurally unrelated compounds, including steroids, fatty acids, and xenobiotics. The polypeptide is Cytochrome P450 2B2 (Cyp2b2) (Rattus norvegicus (Rat)).